Here is a 305-residue protein sequence, read N- to C-terminus: Acetaldehyde dehydrogenase 5 (305 aa).

Ser11–Ile14 serves as a coordination point for NAD(+). Residue Cys130 is the Acyl-thioester intermediate of the active site. NAD(+) is bound by residues Ser161–Asn169 and Asn272.

This sequence belongs to the acetaldehyde dehydrogenase family.

It carries out the reaction acetaldehyde + NAD(+) + CoA = acetyl-CoA + NADH + H(+). The sequence is that of Acetaldehyde dehydrogenase 5 from Dechloromonas aromatica (strain RCB).